The chain runs to 232 residues: MAVISMKQLLEAGVHFGHQTRRWNPKMAEYIFTDRNGIYIIDLQKTAKKLEEAYSFVRELSAQGGTILFVGTKKQAQDAIKEEAERCGMFYVNQRWLGGTLTNFKTIRKRVERLIEIEKMEQEGALSVLPKKEVAKILKEKEKLSRFLSGIKEMKKLPDALFVVDPRKEKIAVAEARKLDIPVVAIVDTNCDPDEVDYVIPGNDDAIRAVKLITSKIADAVIEGRQGEQYAE.

It belongs to the universal ribosomal protein uS2 family.

This chain is Small ribosomal subunit protein uS2, found in Carboxydothermus hydrogenoformans (strain ATCC BAA-161 / DSM 6008 / Z-2901).